A 480-amino-acid polypeptide reads, in one-letter code: Adenosylmethionine-8-amino-7-oxononanoate aminotransferase (480 aa).

126–127 (GS) is a binding site for pyridoxal 5'-phosphate. Substrate is bound at residue Tyr-160. Asp-270 is a binding site for pyridoxal 5'-phosphate. Lys-314 bears the N6-(pyridoxal phosphate)lysine mark. Position 350 (Gly-350) interacts with substrate. Position 351–352 (351–352 (PT)) interacts with pyridoxal 5'-phosphate. Arg-441 provides a ligand contact to substrate.

This sequence belongs to the class-III pyridoxal-phosphate-dependent aminotransferase family. BioA subfamily. It depends on pyridoxal 5'-phosphate as a cofactor.

The catalysed reaction is (8S)-8-amino-7-oxononanoate + S-adenosyl-L-methionine = S-adenosyl-4-methylsulfanyl-2-oxobutanoate + (7R,8S)-7,8-diammoniononanoate. It participates in cofactor biosynthesis; biotin biosynthesis; 7,8-diaminononanoate from 8-amino-7-oxononanoate (SAM route): step 1/1. Functionally, catalyzes the transfer of the alpha-amino group from S-adenosyl-L-methionine (SAM) to 7-keto-8-aminopelargonic acid (KAPA) to form 7,8-diaminopelargonic acid (DAPA). It is the only aminotransferase known to utilize SAM as an amino donor. This is Adenosylmethionine-8-amino-7-oxononanoate aminotransferase from Saccharomyces cerevisiae (strain ATCC 204508 / S288c) (Baker's yeast).